The sequence spans 1701 residues: Merozoite surface protein 1 (1701 aa).

Positions Met1–Cys19 are cleaved as a signal peptide. Gly residues predominate over residues Gly89 to Gly100. The disordered stretch occupies residues Gly89–Thr118. Low complexity predominate over residues Asn101–Thr116. N-linked (GlcNAc...) asparagine glycans are attached at residues Asn110 and Asn239. The disordered stretch occupies residues Asp322–Glu344. N-linked (GlcNAc...) asparagine glycosylation is found at Asn470, Asn536, and Asn607. Residues Ser704–Thr739 are disordered. Acidic residues predominate over residues Glu724–Glu733. Residues Asn802, Asn899, Asn919, Asn965, Asn991, Asn1089, and Asn1196 are each glycosylated (N-linked (GlcNAc...) asparagine). A compositionally biased stretch (low complexity) spans Thr889 to Asn927. The segment at Thr889 to Ala936 is disordered. 2 disordered regions span residues Thr1230–Pro1259 and Lys1451–Lys1472. Polar residues predominate over residues Val1245 to Pro1259. The segment covering Ser1456 to Pro1465 has biased composition (pro residues). A glycan (N-linked (GlcNAc...) asparagine) is linked at Asn1588. 2 consecutive EGF-like domains span residues His1592–Pro1632 and Asn1633–Ser1680. 6 disulfide bridges follow: Cys1594/Cys1605, Cys1599/Cys1615, Cys1617/Cys1628, Cys1636/Cys1649, Cys1643/Cys1663, and Cys1665/Cys1679. A lipid anchor (GPI-anchor amidated serine) is attached at Ser1680. The propeptide at Ser1681–Ile1701 is removed in mature form.

As to quaternary structure, forms a complex composed of subunits p83, p30, p38, and p42 which remain non-covalently associated; the complex is formed at the merozoite surface prior to egress from host erythrocytes. Forms a complex composed of processed MSP1 subunits, MSP6 subunit p36 and MSP7; the complex is formed at the merozoite surface prior to egress from host erythrocytes. Within the complex, interacts (via subunit p38) with MSP6 subunit p36 and (via subunits p83, p30 and p38) with MSP7 (via subunit p22). Forms a complex composed of MSP1, MSP6, DBLMSP1 and DBLMSP2. Within the complex, interacts (via subunit p38) with DBLMSP1 and DBLMSP2. Forms a complex composed of MSP1, and rhoptry proteins RhopH3, RAP1 and CLAG9/RhopH3. Within the complex, interacts (via subunits p42 and p19) with RhopH3 (via C-terminus). Forms a complex composed of MSP1, MSP6, MSP7, MSP9 and MSP3; within the complex, MSP6 and MSP9 mediate the binding to the host erythrocyte. Interacts (via subunits p19 and p42) with MSP9; the interaction is direct; MSP1 subunits p19 or p42, and MSP9 form a co-ligand complex that interacts with host SLC4A1/Band 3 protein. May interact with PFD6. Interacts with host spectrin. In terms of assembly, interacts with host glycophorin GYPA in a sialic acid-independent manner. Interacts with host proinflammatory cytokine S100P; the interaction blocks S100P inflammatory and chemotactic activities. As to quaternary structure, interacts with host SLC4A1/Band 3 (via 5ABC region) on the host erythrocyte surface in a sialic acid-independent manner. In terms of processing, the p190 precursor is cleaved by SUB1 prior to merozoite egress into 4 subunits p83, p30, p38, and p42 which remain non-covalently associated. SUB1-mediated proteolytic cleavage occurs in an orderly manner; the first cleavage occurs at the p30/p38 site, followed by cleavage at the p83/p30 site, the last cleavage occurs at the p38/p42 site. The order of cleavage is essential for parasite viability. SUB1-mediated processing is essential for merozoite egress. In a second processing step during erythrocyte invasion, p42 is cleaved by SUB2 into p33 and p19; the latter remains attached to the merozoite surface via its GPI-anchor and is endocytosed during the subsequent ring stage.

It is found in the cell membrane. The protein localises to the secreted. Its subcellular location is the vacuole membrane. Its function is as follows. During the asexual blood stage, involved in merozoite egress from host erythrocytes possibly via its interaction with the host cytoskeleton protein spectrin resulting in the destabilization of the host cytoskeleton and thus leading to erythrocyte cell membrane rupture. Involved in the binding to host erythrocytes and is required for host erythrocyte invasion. In terms of biological role, by binding to host proinflammatory cytokine S100P may interfere with host immune responses. Functionally, involved in merozoite invasion of host erythrocytes. May play a role in the biogenesis and/or function of the food vacuole during the intraerythrocytic development. In Plasmodium falciparum (isolate mad20 / Papua New Guinea), this protein is Merozoite surface protein 1.